The sequence spans 362 residues: DNA replication and repair protein RecF (362 aa).

Residue G30–T37 coordinates ATP.

It belongs to the RecF family.

It is found in the cytoplasm. In terms of biological role, the RecF protein is involved in DNA metabolism; it is required for DNA replication and normal SOS inducibility. RecF binds preferentially to single-stranded, linear DNA. It also seems to bind ATP. In Xanthomonas oryzae pv. oryzae (strain MAFF 311018), this protein is DNA replication and repair protein RecF.